A 438-amino-acid polypeptide reads, in one-letter code: Xylose isomerase (438 aa).

Residues His-103 and Asp-106 contribute to the active site. Positions 234, 270, 273, 298, 309, 311, and 341 each coordinate Mg(2+).

The protein belongs to the xylose isomerase family. As to quaternary structure, homotetramer. Requires Mg(2+) as cofactor.

The protein localises to the cytoplasm. It carries out the reaction alpha-D-xylose = alpha-D-xylulofuranose. This chain is Xylose isomerase, found in Bacteroides thetaiotaomicron (strain ATCC 29148 / DSM 2079 / JCM 5827 / CCUG 10774 / NCTC 10582 / VPI-5482 / E50).